The following is a 226-amino-acid chain: MNENLFASFITPTMMGFPIVVAIIMFPSILFPSSKRLINNRLHSFQHWLVKLIIKQMMLIHTPKGRTWTLMIVSLIMFIGSTNLLGLLPHTFTPTTQLSMNLSMAIPLWAGAVITGFRHKLKSSLAHFLPQGTPISLIPMLIIIETISLFIQPMALAVRLTANITAGHLLMHLIGGATLVLMNISPPTATITFIILLLLTILEFAVALIQAYVFTLLVSLYLHDNT.

Transmembrane regions (helical) follow at residues 6-26 (FASF…IIMF), 68-88 (WTLM…LGLL), 97-117 (QLSM…ITGF), 138-158 (IPML…ALAV), 164-184 (ITAG…LMNI), and 189-209 (ATIT…VALI).

Belongs to the ATPase A chain family. In terms of assembly, component of the ATP synthase complex composed at least of ATP5F1A/subunit alpha, ATP5F1B/subunit beta, ATP5MC1/subunit c (homooctomer), MT-ATP6/subunit a, MT-ATP8/subunit 8, ATP5ME/subunit e, ATP5MF/subunit f, ATP5MG/subunit g, ATP5MK/subunit k, ATP5MJ/subunit j, ATP5F1C/subunit gamma, ATP5F1D/subunit delta, ATP5F1E/subunit epsilon, ATP5PF/subunit F6, ATP5PB/subunit b, ATP5PD/subunit d, ATP5PO/subunit OSCP. ATP synthase complex consists of a soluble F(1) head domain (subunits alpha(3) and beta(3)) - the catalytic core - and a membrane F(0) domain - the membrane proton channel (subunits c, a, 8, e, f, g, k and j). These two domains are linked by a central stalk (subunits gamma, delta, and epsilon) rotating inside the F1 region and a stationary peripheral stalk (subunits F6, b, d, and OSCP). Interacts with DNAJC30; interaction is direct.

The protein localises to the mitochondrion inner membrane. It catalyses the reaction H(+)(in) = H(+)(out). Its function is as follows. Subunit a, of the mitochondrial membrane ATP synthase complex (F(1)F(0) ATP synthase or Complex V) that produces ATP from ADP in the presence of a proton gradient across the membrane which is generated by electron transport complexes of the respiratory chain. ATP synthase complex consist of a soluble F(1) head domain - the catalytic core - and a membrane F(1) domain - the membrane proton channel. These two domains are linked by a central stalk rotating inside the F(1) region and a stationary peripheral stalk. During catalysis, ATP synthesis in the catalytic domain of F(1) is coupled via a rotary mechanism of the central stalk subunits to proton translocation. With the subunit c (ATP5MC1), forms the proton-conducting channel in the F(0) domain, that contains two crucial half-channels (inlet and outlet) that facilitate proton movement from the mitochondrial intermembrane space (IMS) into the matrix. Protons are taken up via the inlet half-channel and released through the outlet half-channel, following a Grotthuss mechanism. This is ATP synthase F(0) complex subunit a from Mus musculus (Mouse).